A 759-amino-acid chain; its full sequence is Subtilisin-like protease SBT3.16 (759 aa).

A signal peptide spans 1–33 (MELSSLIVPNNKKHFVVVFIGLVLIFKIALITA). Residues 34-119 (ANEKSQIYTV…VTRSKNMKLK (86 aa)) constitute a propeptide, activation peptide. Positions 41 to 118 (YTVHLGERQH…RVTRSKNMKL (78 aa)) constitute an Inhibitor I9 domain. In terms of domain architecture, Peptidase S8 spans 124 to 608 (SDYLGLTSAA…GGLVNPVKVA (485 aa)). Catalysis depends on Asp153, which acts as the Charge relay system. 2 N-linked (GlcNAc...) asparagine glycosylation sites follow: Asn186 and Asn209. His229 acts as the Charge relay system in catalysis. N-linked (GlcNAc...) asparagine glycosylation is present at Asn371. Catalysis depends on Ser539, which acts as the Charge relay system. N-linked (GlcNAc...) asparagine glycosylation is found at Asn632 and Asn711.

This sequence belongs to the peptidase S8 family.

Its subcellular location is the secreted. This is Subtilisin-like protease SBT3.16 from Arabidopsis thaliana (Mouse-ear cress).